Here is a 311-residue protein sequence, read N- to C-terminus: Heme A synthase (311 aa).

Over 1–6 (MQRFIK) the chain is Cytoplasmic. A helical transmembrane segment spans residues 7 to 27 (WLAVITSLDLLIVLLGGALVT). Residues 28 to 62 (KTGSGQGCGKSWPLCNGEFVPSNLSMETIIELSHR) lie on the Extracellular side of the membrane. Cysteines 35 and 42 form a disulfide. Glutamate 58 is a catalytic residue. A heme o-binding site is contributed by histidine 61. A helical transmembrane segment spans residues 63–83 (LTSGSAGILVTLLCILSWKYY). The Cytoplasmic segment spans residues 84–91 (KHVRETKT). A helical membrane pass occupies residues 92–112 (LAILSFVFLVAQALMGAAAVV). At 113–121 (WGQMPAVLA) the chain is on the extracellular side. The helical transmembrane segment at 122 to 142 (IHFGISLISFASVILLTCLIF) threads the bilayer. Histidine 123 contributes to the heme o binding site. Residues 143–159 (EIDQKFDARSLIMDKKM) are Cytoplasmic-facing. A helical transmembrane segment spans residues 160-180 (KFHIYGVTIYSYIVVYTGALV). At 181 to 211 (RHERASLACPDFPLCSKNRPMPTQLHEWVQM) the chain is on the extracellular side. A disulfide bridge links cysteine 189 with cysteine 195. Residues 212–232 (GHRVAAMLIFAWILYAMILAI) traverse the membrane as a helical segment. Histidine 213 provides a ligand contact to heme b. Residues 233-243 (RHYKQQPVVYW) are Cytoplasmic-facing. The helical transmembrane segment at 244–264 (GWIISFILVTLQAVVGVLVVF) threads the bilayer. At 265 to 271 (TNASLAM) the chain is on the extracellular side. Residues 272 to 292 (ALLHSLFISCLFAVLCYLVML) traverse the membrane as a helical segment. Histidine 275 serves as a coordination point for heme b. The Cytoplasmic portion of the chain corresponds to 293–311 (GTRIKVNAKEAGSTSKQTK).

It belongs to the COX15/CtaA family. Type 1 subfamily. In terms of assembly, interacts with CtaB. It depends on heme b as a cofactor.

The protein resides in the cell membrane. It carries out the reaction Fe(II)-heme o + 2 A + H2O = Fe(II)-heme a + 2 AH2. It participates in porphyrin-containing compound metabolism; heme A biosynthesis; heme A from heme O: step 1/1. Catalyzes the conversion of heme O to heme A by two successive hydroxylations of the methyl group at C8. The first hydroxylation forms heme I, the second hydroxylation results in an unstable dihydroxymethyl group, which spontaneously dehydrates, resulting in the formyl group of heme A. The chain is Heme A synthase from Bacillus cereus (strain G9842).